The following is a 908-amino-acid chain: Adhesion G-protein coupled receptor F1 (908 aa).

The N-terminal stretch at 1 to 20 is a signal peptide; sequence MRIGLLWLVPLFTLTEGTDG. Over 21 to 588 the chain is Extracellular; it reads FLQQKNDGRR…VVPVVKWITY (568 aa). N-linked (GlcNAc...) asparagine glycans are attached at residues Asn-133, Asn-167, Asn-328, Asn-353, Asn-367, Asn-388, Asn-422, Asn-453, Asn-510, Asn-519, Asn-526, and Asn-551. Residues 147–255 form the SEA domain; the sequence is ERAKVWGTFE…GSFRVFGKAP (109 aa). Residues 434-577 enclose the GAIN-B domain; it reads PVTQIQSTRG…SMLMSPFVPS (144 aa). Intrachain disulfides connect Cys-532–Cys-559 and Cys-547–Cys-561. Positions 532-577 are GPS; sequence CVFWDFSQLQWSNAGCQLVNETLDTVLCRCSHLTSFSMLMSPFVPS. The interval 566–574 is stachel; sequence SFSMLMSPF. The chain crosses the membrane as a helical span at residues 589-609; that stretch reads IGLSISIASLILCLIIESLFW. Topologically, residues 610-622 are cytoplasmic; the sequence is KQTKRSQTSYTRN. The chain crosses the membrane as a helical span at residues 623–643; that stretch reads ICLVNIAVSLLIADVWFIIAA. Residues 644 to 658 lie on the Extracellular side of the membrane; sequence TVDPSVSPSGVCVAA. A disulfide bridge connects residues Cys-655 and Cys-731. A helical transmembrane segment spans residues 659–679; it reads VFFTHFFYLAVFFWMLVLGIL. The Cytoplasmic segment spans residues 680-697; it reads LAYRIILVFHHMALTTMM. A helical membrane pass occupies residues 698 to 718; it reads AIGFCLGYGCPLLISIITLAV. Over 719 to 742 the chain is Extracellular; that stretch reads TQPSNSYKRNDVCWLNWSDKSKPL. The N-linked (GlcNAc...) asparagine glycan is linked to Asn-734. A helical membrane pass occupies residues 743 to 763; the sequence is LAFVVPALTIVAVNLVVVLLV. At 764–789 the chain is on the cytoplasmic side; that stretch reads LRKLWRPAVGERLNQDDKATAIRMGK. The chain crosses the membrane as a helical span at residues 790–810; the sequence is SLLVLTPLLGLTWGFGIGTMA. The Extracellular segment spans residues 811 to 818; it reads NSHNLAWH. Residues 819 to 839 form a helical membrane-spanning segment; that stretch reads VLFALLNAFQGFFIFCFGILL. Residues 840–908 are Cytoplasmic-facing; sequence DTKLRQLLSN…ITLTQFLSTE (69 aa).

This sequence belongs to the G-protein coupled receptor 2 family. Adhesion G-protein coupled receptor (ADGR) subfamily. In terms of assembly, heterodimer of 2 chains generated by proteolytic processing; the large extracellular N-terminal fragment and the membrane-bound C-terminal fragment predominantly remain associated and non-covalently linked. In terms of processing, autoproteolytically processed at the GPS region of the GAIN-B domain; this cleavage modulates receptor activity. In terms of tissue distribution, expressed in liver, kidney and adrenal gland. In kidney strong expression in the renal pelvis and the ureter.

It localises to the cell membrane. Forms a heterodimer of 2 chains generated by proteolytic processing that remain associated through non-covalent interactions mediated by the GAIN-B domain. In the inactivated receptor, the Stachel sequence (also named stalk) is embedded in the GAIN-B domain, where it adopts a beta-strand conformation. On activation, the Stachel moves into the 7 transmembrane region and adopts a twisted hook-shaped configuration that forms contacts within the receptor, leading to coupling of a G-alpha protein, which activates signaling. The cleaved GAIN-B and N-terminal domains can then dissociate from the rest of the receptor. In terms of biological role, adhesion G-protein coupled receptor (aGPCR) for N-docosahexaenoylethanolamine (synaptamide), an omega-3 fatty acid lipid highly enriched in the brain. Ligand binding causes a conformation change that triggers signaling via guanine nucleotide-binding proteins (G proteins) and modulates the activity of downstream effectors, such as adenylate cyclase. ADGRF1 is coupled to G(s) G proteins and mediates activation of adenylate cyclase activity. Also able to couple to G(q), G(i) and G(12)/G(13) G proteins; additional evidence is however required to confirm this result in vivo. Involved in the development of neurons and cognitive function. In liver, involved in fat accumulation. This is Adhesion G-protein coupled receptor F1 from Mus musculus (Mouse).